Consider the following 551-residue polypeptide: MDRRRFIKGSMAMAAVCGTSGIASLFSQAAFAADSDIADGQTQRFDFSILQSMAHDLAQTAWRGAPRPLPDTLATMTPQAYNSIQYDAEKSLWHNVENRQLDAQFFHMGMGFRRRVRMFSVDPATHLAREIHFRPELFKYNDAGVDTKQLEGQSDLGFAGFRVFKAPELARRDVVSFLGASYFRAVDDTYQYGLSARGLAIDTYTDSKEEFPDFTAFWFDTVKPGATTFTVYALLDSASITGAYKFTIHCEKSQVIMDVENHLYARKDIKQLGISPMTSMFSCGTNERRMCDTIHPQIHDSDRLSMWRGNGEWICRPLNNPQKLQFNAYTDNNPKGFGLLQLDRDFSHYQDIMGWYNKRPSLWVEPRNKWGKGTIGLMEIPTTGETLDNIVCFWQPEKAVKAGDEFAFQYRLYWSAQPPVHCPLARVMATRTGMGGFPEGWAPGEHYPEKWARRFAVDFVGGDLKAAAPKGIEPVITLSSGEAKQIEILYIEPIDGYRIQFDWYPTSDSTDPVDMRMYLRCQGDAISETWLYQYFPPAPDKRQYVDDRVMS.

The tat-type signal signal peptide spans Met1–Ala32.

Belongs to the OpgD/OpgG family. In terms of processing, predicted to be exported by the Tat system. The position of the signal peptide cleavage has not been experimentally proven.

It localises to the periplasm. It functions in the pathway glycan metabolism; osmoregulated periplasmic glucan (OPG) biosynthesis. Probably involved in the control of the structural glucose backbone of osmoregulated periplasmic glucans (OPGs). This Shigella flexneri protein is Glucans biosynthesis protein D (mdoD).